The following is a 373-amino-acid chain: uncharacterized protein (373 aa).

The protein belongs to the glycosyltransferase 28 family.

This is an uncharacterized protein from Bacillus subtilis (strain 168).